Consider the following 296-residue polypeptide: Large ribosomal subunit protein uL15m (296 aa).

The transit peptide at 1 to 21 (MAGPLQGGGARALDLLRGLPR) directs the protein to the mitochondrion. A disordered region spans residues 22 to 66 (VSLANLKPNPGSKKPERRPRGRRRGRKCGRGHKGERQRGTRPRLG). Positions 36–52 (PERRPRGRRRGRKCGRG) are enriched in basic residues.

Belongs to the universal ribosomal protein uL15 family. In terms of assembly, component of the mitochondrial large ribosomal subunit (mt-LSU). Mature mammalian 55S mitochondrial ribosomes consist of a small (28S) and a large (39S) subunit. The 28S small subunit contains a 12S ribosomal RNA (12S mt-rRNA) and 30 different proteins. The 39S large subunit contains a 16S rRNA (16S mt-rRNA), a copy of mitochondrial valine transfer RNA (mt-tRNA(Val)), which plays an integral structural role, and 52 different proteins.

The protein localises to the mitochondrion. The chain is Large ribosomal subunit protein uL15m (MRPL15) from Homo sapiens (Human).